Here is a 211-residue protein sequence, read N- to C-terminus: Shikimate kinase (211 aa).

Positions 1-23 (MNASANLCAASDNDPQPGDQEAA) are disordered. Residue 50 to 55 (GAGKTT) coordinates ATP. Thr-54 is a Mg(2+) binding site. Residues Asp-72, Arg-96, and Gly-118 each contribute to the substrate site. Arg-156 is a binding site for ATP. Position 175 (Arg-175) interacts with substrate.

It belongs to the shikimate kinase family. Monomer. The cofactor is Mg(2+).

It is found in the cytoplasm. The catalysed reaction is shikimate + ATP = 3-phosphoshikimate + ADP + H(+). It participates in metabolic intermediate biosynthesis; chorismate biosynthesis; chorismate from D-erythrose 4-phosphate and phosphoenolpyruvate: step 5/7. Catalyzes the specific phosphorylation of the 3-hydroxyl group of shikimic acid using ATP as a cosubstrate. In Bordetella bronchiseptica (strain ATCC BAA-588 / NCTC 13252 / RB50) (Alcaligenes bronchisepticus), this protein is Shikimate kinase.